We begin with the raw amino-acid sequence, 120 residues long: Large ribosomal subunit protein uL22 (120 aa).

The segment at methionine 1–alanine 25 is disordered.

Belongs to the universal ribosomal protein uL22 family. In terms of assembly, part of the 50S ribosomal subunit.

This protein binds specifically to 23S rRNA; its binding is stimulated by other ribosomal proteins, e.g. L4, L17, and L20. It is important during the early stages of 50S assembly. It makes multiple contacts with different domains of the 23S rRNA in the assembled 50S subunit and ribosome. In terms of biological role, the globular domain of the protein is located near the polypeptide exit tunnel on the outside of the subunit, while an extended beta-hairpin is found that lines the wall of the exit tunnel in the center of the 70S ribosome. This Borrelia duttonii (strain Ly) protein is Large ribosomal subunit protein uL22.